Consider the following 132-residue polypeptide: Small ribosomal subunit protein uS8c (132 aa).

It belongs to the universal ribosomal protein uS8 family. As to quaternary structure, part of the 30S ribosomal subunit.

It is found in the plastid. Its subcellular location is the chloroplast. Functionally, one of the primary rRNA binding proteins, it binds directly to 16S rRNA central domain where it helps coordinate assembly of the platform of the 30S subunit. The polypeptide is Small ribosomal subunit protein uS8c (rps8) (Psilotum nudum (Whisk fern)).